Here is a 342-residue protein sequence, read N- to C-terminus: Ribosomal RNA small subunit methyltransferase C (342 aa).

Belongs to the methyltransferase superfamily. RsmC family. In terms of assembly, monomer.

It localises to the cytoplasm. It carries out the reaction guanosine(1207) in 16S rRNA + S-adenosyl-L-methionine = N(2)-methylguanosine(1207) in 16S rRNA + S-adenosyl-L-homocysteine + H(+). Its function is as follows. Specifically methylates the guanine in position 1207 of 16S rRNA in the 30S particle. This is Ribosomal RNA small subunit methyltransferase C from Salmonella choleraesuis (strain SC-B67).